The chain runs to 241 residues: L-aspartate dehydrogenase (241 aa).

NAD(+) contacts are provided by residues 10-11 (NI), aspartate 28, 56-57 (AS), 63-64 (EY), 78-79 (IS), alanine 109, and asparagine 164. Histidine 193 is an active-site residue.

The protein belongs to the L-aspartate dehydrogenase family. Homodimer.

The catalysed reaction is L-aspartate + NADP(+) + H2O = oxaloacetate + NH4(+) + NADPH + H(+). The enzyme catalyses L-aspartate + NAD(+) + H2O = oxaloacetate + NH4(+) + NADH + H(+). The protein operates within cofactor biosynthesis; NAD(+) biosynthesis; iminoaspartate from L-aspartate (dehydrogenase route): step 1/1. Its activity is regulated as follows. Competitively inhibited by L-malate and NH(4)(+). Its function is as follows. Specifically catalyzes the NAD or NADP-dependent dehydrogenation of L-aspartate to iminoaspartate. Does not show aspartate oxidase activity. Is also able to catalyze the reverse reaction, i.e. the reductive amination of oxaloacetate. In Thermotoga maritima (strain ATCC 43589 / DSM 3109 / JCM 10099 / NBRC 100826 / MSB8), this protein is L-aspartate dehydrogenase.